The following is a 2150-amino-acid chain: Hybrid signal transduction histidine kinase A (2150 aa).

Basic and acidic residues predominate over residues 1–10 (MELKTFKDLN). 8 disordered regions span residues 1–41 (MELK…QQQQ), 68–149 (HIPQ…YYYS), 184–267 (NSSS…HQRR), 286–323 (KNKP…GSLG), 339–359 (TEES…NCGS), 415–505 (NNNN…NSPR), 520–546 (SLTS…GRNG), and 560–733 (KPVV…NGAT). Residues 19–32 (PVINTGDQPNPLRT) show a composition bias toward polar residues. The segment covering 68-81 (HIPQQLYQKQQQQQ) has biased composition (low complexity). Residues 82–104 (HSHSYGNHSFIHNVSPTSPSYDI) show a composition bias toward polar residues. Composition is skewed to low complexity over residues 105 to 145 (NNNN…YNNN) and 184 to 244 (NSSS…NNNI). Polar residues predominate over residues 289-304 (PLSSSTPSTVNTCGAV). Composition is skewed to low complexity over residues 305–318 (NNNS…NNNS), 344–359 (GGNN…NCGS), and 415–447 (NNNN…HNIS). Residues 448–468 (PRGSNISPRSNNGGSTTISPR) show a composition bias toward polar residues. 3 stretches are compositionally biased toward low complexity: residues 469-485 (NISN…NNNI), 520-545 (SLTS…NGRN), and 565-600 (NNGN…INNN). Polar residues predominate over residues 614–628 (SKTNSLQDFETSSMN). The span at 657–727 (NSNNTNSNNS…NNNNNNNNNN (71 aa)) shows a compositional bias: low complexity. Residues 772 to 792 (AIILGLFIVGSSISILATLVL) form a helical membrane-spanning segment. In terms of domain architecture, CHASE spans 838-1082 (STSEDQFVPF…NVGGRNWMIA (245 aa)). The chain crosses the membrane as a helical span at residues 1098 to 1118 (PYAIGGVCMLLSALVSFWFAV). Positions 1139–1164 (NRKLAEKALAESQERLELAMEGSEDA) form a coiled coil. Disordered regions lie at residues 1209-1228 (LNFK…FNLF) and 1233-1252 (VDSS…GGGG). The 83-residue stretch at 1235–1317 (SSSPQSITNV…SEIKKTITRE (83 aa)) folds into the PAS domain. The PAC domain occupies 1321 to 1376 (MEIECRMRKKYGGYLYIIMRGKVVSNETSFKDNSLRMAGTLRDMTSRKDMQRLILE). One can recognise a Histidine kinase domain in the interval 1393–1620 (TVSHEVRTPL…KFKCIIPFLL (228 aa)). Histidine 1396 bears the Phosphohistidine; by autocatalysis mark. Disordered stretches follow at residues 1874–1893 (GGGS…NNNF), 1933–1952 (HGNQ…NNSS), and 1962–2017 (QNNN…DTPV). Low complexity-rich tracts occupy residues 1878-1893 (NTMN…NNNF), 1935-1952 (NQQQ…NNSS), and 1962-2002 (QNNN…TPTL). Positions 2026–2146 (KALIVEDNEL…TLKDALAKWG (121 aa)) constitute a Response regulatory domain. 4-aspartylphosphate is present on aspartate 2076.

Interacts with SDF-2, an acbA peptide involved in sporulation.

The protein resides in the cell membrane. It catalyses the reaction ATP + protein L-histidine = ADP + protein N-phospho-L-histidine.. Functionally, acts as a receptor histidine kinase for the cytokinin SDF-2 in a signal transduction pathway that regulates prestalk gene expression and controls terminal differentiation of prespore cells. Binding of SDF-2 to this protein inhibits phosphorelay and induces rapid sporulation. This protein undergoes an ATP-dependent autophosphorylation at a conserved histidine residue in the kinase core, and a phosphoryl group is then transferred to a conserved aspartate residue in the receiver domain. The protein is Hybrid signal transduction histidine kinase A (dhkA) of Dictyostelium discoideum (Social amoeba).